Here is a 237-residue protein sequence, read N- to C-terminus: NAD(P)H-quinone oxidoreductase subunit K (237 aa).

Cysteine 52, cysteine 53, cysteine 117, and cysteine 148 together coordinate [4Fe-4S] cluster.

The protein belongs to the complex I 20 kDa subunit family. NDH-1 can be composed of about 15 different subunits; different subcomplexes with different compositions have been identified which probably have different functions. Requires [4Fe-4S] cluster as cofactor.

It is found in the cellular thylakoid membrane. The enzyme catalyses a plastoquinone + NADH + (n+1) H(+)(in) = a plastoquinol + NAD(+) + n H(+)(out). It catalyses the reaction a plastoquinone + NADPH + (n+1) H(+)(in) = a plastoquinol + NADP(+) + n H(+)(out). NDH-1 shuttles electrons from an unknown electron donor, via FMN and iron-sulfur (Fe-S) centers, to quinones in the respiratory and/or the photosynthetic chain. The immediate electron acceptor for the enzyme in this species is believed to be plastoquinone. Couples the redox reaction to proton translocation, and thus conserves the redox energy in a proton gradient. Cyanobacterial NDH-1 also plays a role in inorganic carbon-concentration. In Thermosynechococcus vestitus (strain NIES-2133 / IAM M-273 / BP-1), this protein is NAD(P)H-quinone oxidoreductase subunit K.